The following is a 309-amino-acid chain: Aspartate carbamoyltransferase catalytic subunit (309 aa).

The carbamoyl phosphate site is built by Arg58 and Thr59. Residue Lys86 coordinates L-aspartate. Residues Arg108, His136, and Gln139 each contribute to the carbamoyl phosphate site. Residues Arg169 and Arg223 each contribute to the L-aspartate site. Carbamoyl phosphate contacts are provided by Gly265 and Pro266.

Belongs to the aspartate/ornithine carbamoyltransferase superfamily. ATCase family. Heterododecamer (2C3:3R2) of six catalytic PyrB chains organized as two trimers (C3), and six regulatory PyrI chains organized as three dimers (R2).

It catalyses the reaction carbamoyl phosphate + L-aspartate = N-carbamoyl-L-aspartate + phosphate + H(+). It participates in pyrimidine metabolism; UMP biosynthesis via de novo pathway; (S)-dihydroorotate from bicarbonate: step 2/3. Functionally, catalyzes the condensation of carbamoyl phosphate and aspartate to form carbamoyl aspartate and inorganic phosphate, the committed step in the de novo pyrimidine nucleotide biosynthesis pathway. The polypeptide is Aspartate carbamoyltransferase catalytic subunit (Akkermansia muciniphila (strain ATCC BAA-835 / DSM 22959 / JCM 33894 / BCRC 81048 / CCUG 64013 / CIP 107961 / Muc)).